The sequence spans 351 residues: Ferrochelatase (351 aa).

Fe cation-binding residues include His220 and Glu301.

The protein belongs to the ferrochelatase family.

The protein localises to the cytoplasm. It catalyses the reaction heme b + 2 H(+) = protoporphyrin IX + Fe(2+). It participates in porphyrin-containing compound metabolism; protoheme biosynthesis; protoheme from protoporphyrin-IX: step 1/1. In terms of biological role, catalyzes the ferrous insertion into protoporphyrin IX. The protein is Ferrochelatase of Rhodobacter capsulatus (Rhodopseudomonas capsulata).